We begin with the raw amino-acid sequence, 388 residues long: Cell adhesion molecule 4 (388 aa).

A signal peptide spans 1 to 20 (MGRARRFQWPLLLLWAAAAG). The Ig-like V-type domain maps to 21–119 (PGTGQEVQTE…DTHHQIATLT (99 aa)). Topologically, residues 25–324 (QEVQTENVTV…VEAQTSVPYA (300 aa)) are extracellular. Asn-31 and Asn-67 each carry an N-linked (GlcNAc...) asparagine glycan. 3 disulfides stabilise this stretch: Cys-44/Cys-104, Cys-145/Cys-199, and Cys-245/Cys-291. Ig-like C2-type domains lie at 124-219 (PENP…YVLD) and 224-307 (PTAR…YVLV). A glycan (N-linked (GlcNAc...) asparagine) is linked at Asn-286. Residues 325–345 (IVGGILALLVFLIICVLVGMV) form a helical membrane-spanning segment. The Cytoplasmic portion of the chain corresponds to 346–388 (WCSVRQKGSYLTHEASGLDEQGEAREAFLNGGDGHKRKEEFFI). The residue at position 361 (Ser-361) is a Phosphoserine.

Belongs to the nectin family. As to quaternary structure, monomer and homodimer. N-glycosylated. In terms of tissue distribution, expressed in the brain and several organs including the kidney and liver.

It localises to the membrane. In terms of biological role, involved in the cell-cell adhesion. Has calcium- and magnesium-independent cell-cell adhesion activity. May have tumor-suppressor activity. This Mus musculus (Mouse) protein is Cell adhesion molecule 4 (Cadm4).